A 331-amino-acid chain; its full sequence is Nucleotide sugar transporter SLC35B4 (331 aa).

A run of 11 helical transmembrane segments spans residues 4–24, 30–50, 59–79, 92–112, 117–137, 153–173, 201–221, 229–249, 251–267, 268–288, and 291–311; these read ALAV…LELL, GCGN…GFLF, PAIP…VSVV, LHMI…IIIL, SIFK…CTFM, GFQA…ALLM, ALPL…AVLF, IPVI…NIIT, YVCI…CASL, TVTL…ILYF, and PFTL…LMYT. The Mediates endoplasmic reticulum retention motif lies at 326 to 331; it reads KDSKKN.

It belongs to the nucleotide-sugar transporter family. SLC35B subfamily.

Its subcellular location is the endoplasmic reticulum membrane. It catalyses the reaction UDP-N-acetyl-alpha-D-glucosamine(in) + UDP-alpha-D-glucuronate(out) = UDP-N-acetyl-alpha-D-glucosamine(out) + UDP-alpha-D-glucuronate(in). The catalysed reaction is UDP-alpha-D-xylose(in) + UDP-alpha-D-glucuronate(out) = UDP-alpha-D-xylose(out) + UDP-alpha-D-glucuronate(in). In terms of biological role, antiporter that transports nucleotide sugars across the endoplasmic reticulum (ER) membrane in exchange for another nucleotide sugar. May couple UDP-alpha-D-glucuronate (UDP-GlcA) or UDP-alpha-D-xylose (UDP-Xyl) efflux to UDP-alpha-D-glucuronate (UDP-GlcA) influx into the ER lumen, which in turn stimulates glucuronidation and excretion of endobiotics and xenobiotics. The chain is Nucleotide sugar transporter SLC35B4 (SLC35B4) from Pongo abelii (Sumatran orangutan).